The sequence spans 251 residues: Ubiquinone/menaquinone biosynthesis C-methyltransferase UbiE (251 aa).

Residues Thr74, Asp95, 123 to 124, and Ser140 contribute to the S-adenosyl-L-methionine site; that span reads NA.

It belongs to the class I-like SAM-binding methyltransferase superfamily. MenG/UbiE family.

It catalyses the reaction a 2-demethylmenaquinol + S-adenosyl-L-methionine = a menaquinol + S-adenosyl-L-homocysteine + H(+). The catalysed reaction is a 2-methoxy-6-(all-trans-polyprenyl)benzene-1,4-diol + S-adenosyl-L-methionine = a 5-methoxy-2-methyl-3-(all-trans-polyprenyl)benzene-1,4-diol + S-adenosyl-L-homocysteine + H(+). It participates in quinol/quinone metabolism; menaquinone biosynthesis; menaquinol from 1,4-dihydroxy-2-naphthoate: step 2/2. Its pathway is cofactor biosynthesis; ubiquinone biosynthesis. In terms of biological role, methyltransferase required for the conversion of demethylmenaquinol (DMKH2) to menaquinol (MKH2) and the conversion of 2-polyprenyl-6-methoxy-1,4-benzoquinol (DDMQH2) to 2-polyprenyl-3-methyl-6-methoxy-1,4-benzoquinol (DMQH2). In Cronobacter sakazakii (strain ATCC BAA-894) (Enterobacter sakazakii), this protein is Ubiquinone/menaquinone biosynthesis C-methyltransferase UbiE.